We begin with the raw amino-acid sequence, 515 residues long: Interferon alpha/beta receptor 2 (515 aa).

The signal sequence occupies residues 1–26 (MLLSQNAFIFRSLNLVLMVYISLVFG). The Extracellular portion of the chain corresponds to 27-243 (ISYDSPDYTD…QESESAESAK (217 aa)). 2 disulfide bridges follow: C39–C122 and C85–C93. N-linked (GlcNAc...) asparagine glycosylation is found at N58, N87, N116, N188, and N192. C207 and C227 form a disulfide bridge. A helical membrane pass occupies residues 244–264 (IGGIITVFLIALVLTSTIVTL). The Cytoplasmic portion of the chain corresponds to 265–515 (KWIGYICLRN…VDLGDGYIMR (251 aa)). Disordered regions lie at residues 318–418 (YDDE…EGSG) and 455–515 (EMVD…YIMR). Y337 carries the post-translational modification Phosphotyrosine. Over residues 362-375 (PESEEEPDLPEVDV) the composition is skewed to acidic residues. S400 carries the post-translational modification Phosphoserine. Residues 418–444 (GGRITFNVDLNSVFLRVLDDEDSDDLE) are mediates interaction with STAT2 (and required for the recruitment of USP18). The span at 464–488 (NVQSNHLLASGEGTQPTFPSPSSEG) shows a compositional bias: polar residues. S467 carries the phosphoserine modification. A Phosphotyrosine modification is found at Y512.

The protein belongs to the type II cytokine receptor family. Heterodimer with IFNAR1; forming the receptor for type I interferon. Interacts with JAK1. Interacts with the transcriptional factors STAT1 and STAT2. Interacts with USP18; indirectly via STAT2, it negatively regulates the assembly of the ternary interferon-IFNAR1-IFNAR2 complex and therefore type I interferon signaling. Post-translationally, phosphorylated on tyrosine residues upon interferon binding. Phosphorylation at Tyr-337 or Tyr-512 are sufficient to mediate interferon dependent activation of STAT1, STAT2 and STAT3 leading to antiproliferative effects on many different cell types. In terms of processing, glycosylated. As to expression, isoform 3 is detected in the urine (at protein level). Expressed in blood cells. Expressed in lymphoblastoid and fibrosarcoma cell lines.

Its subcellular location is the cell membrane. It localises to the secreted. Together with IFNAR1, forms the heterodimeric receptor for type I interferons (including interferons alpha, beta, epsilon, omega and kappa). Type I interferon binding activates the JAK-STAT signaling cascade, resulting in transcriptional activation or repression of interferon-regulated genes that encode the effectors of the interferon response. Mechanistically, type I interferon-binding brings the IFNAR1 and IFNAR2 subunits into close proximity with one another, driving their associated Janus kinases (JAKs) (TYK2 bound to IFNAR1 and JAK1 bound to IFNAR2) to cross-phosphorylate one another. The activated kinases phosphorylate specific tyrosine residues on the intracellular domains of IFNAR1 and IFNAR2, forming docking sites for the STAT transcription factors (STAT1, STAT2 and STAT). STAT proteins are then phosphorylated by the JAKs, promoting their translocation into the nucleus to regulate expression of interferon-regulated genes. Functionally, potent inhibitor of type I IFN receptor activity. The polypeptide is Interferon alpha/beta receptor 2 (IFNAR2) (Homo sapiens (Human)).